The following is a 349-amino-acid chain: UDP-3-O-acylglucosamine N-acyltransferase (349 aa).

Histidine 240 serves as the catalytic Proton acceptor.

This sequence belongs to the transferase hexapeptide repeat family. LpxD subfamily. Homotrimer.

It catalyses the reaction a UDP-3-O-[(3R)-3-hydroxyacyl]-alpha-D-glucosamine + a (3R)-hydroxyacyl-[ACP] = a UDP-2-N,3-O-bis[(3R)-3-hydroxyacyl]-alpha-D-glucosamine + holo-[ACP] + H(+). The protein operates within bacterial outer membrane biogenesis; LPS lipid A biosynthesis. Its function is as follows. Catalyzes the N-acylation of UDP-3-O-acylglucosamine using 3-hydroxyacyl-ACP as the acyl donor. Is involved in the biosynthesis of lipid A, a phosphorylated glycolipid that anchors the lipopolysaccharide to the outer membrane of the cell. This chain is UDP-3-O-acylglucosamine N-acyltransferase, found in Porphyromonas gingivalis (strain ATCC 33277 / DSM 20709 / CIP 103683 / JCM 12257 / NCTC 11834 / 2561).